We begin with the raw amino-acid sequence, 152 residues long: Transcriptional regulator MraZ (152 aa).

2 SpoVT-AbrB domains span residues 5 to 52 (ATLV…PLPE) and 81 to 124 (ASEC…DETT).

The protein belongs to the MraZ family. Forms oligomers.

It is found in the cytoplasm. The protein resides in the nucleoid. Negatively regulates its own expression and that of the subsequent genes in the proximal part of the division and cell wall (dcw) gene cluster. Acts by binding directly to DNA. May also regulate the expression of genes outside the dcw cluster. The polypeptide is Transcriptional regulator MraZ (Escherichia coli O45:K1 (strain S88 / ExPEC)).